Here is a 102-residue protein sequence, read N- to C-terminus: Large ribosomal subunit protein bL21 (102 aa).

This sequence belongs to the bacterial ribosomal protein bL21 family. In terms of assembly, part of the 50S ribosomal subunit. Contacts protein L20.

Its function is as follows. This protein binds to 23S rRNA in the presence of protein L20. This is Large ribosomal subunit protein bL21 from Solidesulfovibrio magneticus (strain ATCC 700980 / DSM 13731 / RS-1) (Desulfovibrio magneticus).